Consider the following 442-residue polypeptide: Trigger factor (442 aa).

The 86-residue stretch at 165–250 folds into the PPIase FKBP-type domain; the sequence is DDTAQIDFEG…LHKILQKELP (86 aa).

The protein belongs to the FKBP-type PPIase family. Tig subfamily.

It localises to the cytoplasm. It catalyses the reaction [protein]-peptidylproline (omega=180) = [protein]-peptidylproline (omega=0). Its function is as follows. Involved in protein export. Acts as a chaperone by maintaining the newly synthesized protein in an open conformation. Functions as a peptidyl-prolyl cis-trans isomerase. This chain is Trigger factor, found in Helicobacter hepaticus (strain ATCC 51449 / 3B1).